A 106-amino-acid chain; its full sequence is Putative double-stranded DNA mimic protein PM0536 (106 aa).

The protein belongs to the putative dsDNA mimic protein family.

In terms of biological role, may act as a double-stranded DNA (dsDNA) mimic. Probably regulates the activity of a dsDNA-binding protein. The sequence is that of Putative double-stranded DNA mimic protein PM0536 from Pasteurella multocida (strain Pm70).